A 155-amino-acid chain; its full sequence is Secreted RxLR effector protein 38 (155 aa).

The signal sequence occupies residues 1 to 17 (MHLIYIVMAATATTLHA). The RxLR-dEER signature appears at 49–64 (RFLRGAYEDVHREEER).

The protein belongs to the RxLR effector family.

It localises to the secreted. It is found in the host nucleus. The protein localises to the host cytoplasm. In terms of biological role, secreted effector that completely suppresses the host cell death induced by cell death-inducing proteins. The chain is Secreted RxLR effector protein 38 from Plasmopara viticola (Downy mildew of grapevine).